Reading from the N-terminus, the 259-residue chain is Troponin T, fast skeletal muscle (259 aa).

A compositionally biased stretch (acidic residues) spans 1–36 (MSDEETEQVEEQYEEEEEAQEEEVQEEAPEPEEVQE). The interval 1 to 62 (MSDEETEQVE…EKVDFDDIQK (62 aa)) is disordered. At Ser-2 the chain carries N-acetylserine. Ser-2 is modified (phosphoserine). The segment covering 50 to 62 (PEGEKVDFDDIQK) has biased composition (basic and acidic residues). Ser-78 is modified (phosphoserine). Positions 101–143 (RAERAEQQRIRAEKERERQNRLAEEKARREEEDAKRRAEDDLK) are enriched in basic and acidic residues. The disordered stretch occupies residues 101-180 (RAERAEQQRI…TAREMKKKIL (80 aa)). Phosphoserine is present on residues Ser-149, Ser-156, and Ser-157. Positions 171–180 (TAREMKKKIL) are enriched in basic and acidic residues. At Ser-193 the chain carries Phosphoserine. A Phosphotyrosine modification is found at Tyr-209. The segment at 235 to 259 (RIDQAQKHSKKAGATAKGKVGGRWK) is disordered.

The protein belongs to the troponin T family.

In terms of biological role, troponin T is the tropomyosin-binding subunit of troponin, the thin filament regulatory complex which confers calcium-sensitivity to striated muscle actomyosin ATPase activity. The protein is Troponin T, fast skeletal muscle (Tnnt3) of Rattus norvegicus (Rat).